Reading from the N-terminus, the 373-residue chain is Queuine tRNA-ribosyltransferase (373 aa).

Asp-90 acts as the Proton acceptor in catalysis. Substrate is bound by residues 90 to 94, Asp-144, Gln-193, and Gly-220; that span reads DSGGF. The segment at 251 to 257 is RNA binding; it reads GVGTPED. Asp-270 functions as the Nucleophile in the catalytic mechanism. The segment at 275–279 is RNA binding; important for wobble base 34 recognition; the sequence is TRNAR. Residues Cys-308, Cys-310, Cys-313, and His-339 each contribute to the Zn(2+) site.

It belongs to the queuine tRNA-ribosyltransferase family. In terms of assembly, homodimer. Within each dimer, one monomer is responsible for RNA recognition and catalysis, while the other monomer binds to the replacement base PreQ1. Requires Zn(2+) as cofactor.

The enzyme catalyses 7-aminomethyl-7-carbaguanine + guanosine(34) in tRNA = 7-aminomethyl-7-carbaguanosine(34) in tRNA + guanine. Its pathway is tRNA modification; tRNA-queuosine biosynthesis. Functionally, catalyzes the base-exchange of a guanine (G) residue with the queuine precursor 7-aminomethyl-7-deazaguanine (PreQ1) at position 34 (anticodon wobble position) in tRNAs with GU(N) anticodons (tRNA-Asp, -Asn, -His and -Tyr). Catalysis occurs through a double-displacement mechanism. The nucleophile active site attacks the C1' of nucleotide 34 to detach the guanine base from the RNA, forming a covalent enzyme-RNA intermediate. The proton acceptor active site deprotonates the incoming PreQ1, allowing a nucleophilic attack on the C1' of the ribose to form the product. After dissociation, two additional enzymatic reactions on the tRNA convert PreQ1 to queuine (Q), resulting in the hypermodified nucleoside queuosine (7-(((4,5-cis-dihydroxy-2-cyclopenten-1-yl)amino)methyl)-7-deazaguanosine). This chain is Queuine tRNA-ribosyltransferase, found in Campylobacter jejuni subsp. jejuni serotype O:2 (strain ATCC 700819 / NCTC 11168).